Consider the following 309-residue polypeptide: Homoserine kinase (309 aa).

91–101 (PIGSGLGSSAC) serves as a coordination point for ATP.

Belongs to the GHMP kinase family. Homoserine kinase subfamily.

It localises to the cytoplasm. It catalyses the reaction L-homoserine + ATP = O-phospho-L-homoserine + ADP + H(+). The protein operates within amino-acid biosynthesis; L-threonine biosynthesis; L-threonine from L-aspartate: step 4/5. Functionally, catalyzes the ATP-dependent phosphorylation of L-homoserine to L-homoserine phosphate. In Pectobacterium carotovorum subsp. carotovorum (strain PC1), this protein is Homoserine kinase.